The following is a 71-amino-acid chain: UPF0352 protein VCM66_1964 (71 aa).

It belongs to the UPF0352 family.

The sequence is that of UPF0352 protein VCM66_1964 from Vibrio cholerae serotype O1 (strain M66-2).